The primary structure comprises 505 residues: 4-alpha-glucanotransferase (505 aa).

This sequence belongs to the disproportionating enzyme family.

The protein resides in the cytoplasm. The enzyme catalyses Transfers a segment of a (1-&gt;4)-alpha-D-glucan to a new position in an acceptor, which may be glucose or a (1-&gt;4)-alpha-D-glucan.. The sequence is that of 4-alpha-glucanotransferase (malQ) from Synechocystis sp. (strain ATCC 27184 / PCC 6803 / Kazusa).